The sequence spans 61 residues: Antimicrobial peptide 1 (61 aa).

The first 24 residues, 1-24, serve as a signal peptide directing secretion; sequence LPVAFLKFAIVLILFIAMSAMIEA. Pyrrolidone carboxylic acid is present on glutamine 25. Cystine bridges form between cysteine 26-cysteine 43, cysteine 33-cysteine 47, and cysteine 42-cysteine 58.

It belongs to the AMP family. As to quaternary structure, homodimer. Post-translationally, three disulfide bonds are present. Found only in seeds.

Its subcellular location is the secreted. In terms of biological role, possesses antifungal activity and is also active on two tested Gram-positive bacteria but is non-toxic for Gram-negative bacteria and cultured human cells. The protein is Antimicrobial peptide 1 (AMP1) of Mirabilis jalapa (Garden four-o'clock).